Consider the following 181-residue polypeptide: Adenylate kinase (181 aa).

ATP is bound at residue 10–15; that stretch reads GAGKGT. The segment at 30–59 is NMP; the sequence is STGDLFRANISQQTPLGREAQKYMDAGDLV. AMP contacts are provided by residues T31, R36, 57 to 59, 85 to 88, and Q92; these read DLV and GYPR. The tract at residues 126–132 is LID; it reads ARGRNDD. R127 lines the ATP pocket. Residues R129 and R140 each coordinate AMP. Position 166 (G166) interacts with ATP.

This sequence belongs to the adenylate kinase family. Monomer.

It is found in the cytoplasm. It catalyses the reaction AMP + ATP = 2 ADP. It participates in purine metabolism; AMP biosynthesis via salvage pathway; AMP from ADP: step 1/1. Functionally, catalyzes the reversible transfer of the terminal phosphate group between ATP and AMP. Plays an important role in cellular energy homeostasis and in adenine nucleotide metabolism. The polypeptide is Adenylate kinase (Nocardia farcinica (strain IFM 10152)).